Here is a 2300-residue protein sequence, read N- to C-terminus: Protein hobbit (2300 aa).

Residues 1–21 form the signal peptide; that stretch reads MMLQLLLFCLALFIFVYWVLP. A transmembrane domain region spans residues 23-117; that stretch reads GISWYLVKRF…LRRTQTLAGK (95 aa). 2 disordered regions span residues 269-290 and 2111-2148; these read TSTG…RSYD and VSDE…GKKG. Over residues 270–282 the composition is skewed to polar residues; the sequence is STGQPSRRSTQGL. Residues 1750 to 2300 form a required for endoplasmic reticulum-cell membrane contact sites location and binding to phosphatidylinositols region; it reads VVSETVGAFL…ASSGKRSGND (551 aa). Low complexity predominate over residues 2119–2140; the sequence is ASTSSASTTNLQAKSSTSSSTK.

The protein localises to the cell membrane. Its subcellular location is the endoplasmic reticulum membrane. It is found in the mitochondrion membrane. Its function is as follows. Tube-forming lipid transport protein which binds to phosphatidylinositols and affects phosphatidylinositol-4,5-bisphosphate (PtdIns-4,5-P2) distribution. The chain is Protein hobbit from Drosophila melanogaster (Fruit fly).